Reading from the N-terminus, the 86-residue chain is Anti-adapter protein IraP (86 aa).

Positions 1–36 (MKNLIAELLFKLAQKEEESKELCAQVEALEIIVTAM) form a coiled coil.

Belongs to the IraP family. In terms of assembly, interacts with RssB.

Its subcellular location is the cytoplasm. Its function is as follows. Inhibits RpoS proteolysis by regulating RssB activity, thereby increasing the stability of the sigma stress factor RpoS especially during phosphate starvation, but also in stationary phase and during nitrogen starvation. Its effect on RpoS stability is due to its interaction with RssB, which probably blocks the interaction of RssB with RpoS, and the consequent delivery of the RssB-RpoS complex to the ClpXP protein degradation pathway. This Escherichia coli (strain SE11) protein is Anti-adapter protein IraP.